The following is an 83-amino-acid chain: U2-hexatoxin-Hi1a (83 aa).

Positions 1–23 are cleaved as a signal peptide; it reads MRNTTFLVLNVMLLVSVALFCAA. A propeptide spanning residues 24 to 45 is cleaved from the precursor; that stretch reads DPEMEKSSFAEILDTGNPEQER. 4 disulfide bridges follow: C47/C63, C54/C68, C62/C78, and C70/C76.

This sequence belongs to the neurotoxin 07 (Beta/delta-agtx) family. Expressed by the venom gland.

The protein localises to the secreted. In terms of biological role, inhibits sodium channels (Nav) of insects. The protein is U2-hexatoxin-Hi1a of Hadronyche infensa (Fraser island funnel-web spider).